The sequence spans 105 residues: Death-associated protein 1 homolog (105 aa).

The tract at residues 75–105 is disordered; sequence AAQVAHQKPVPSAQKLPAGQHLNQHIHQPRK. Positions 95 to 105 are enriched in polar residues; it reads HLNQHIHQPRK.

The protein belongs to the DAP-DAPL1 family. Associates with ribosomes; inhibiting translation. Interacts with eiF5a (eif5a and eif5a2); inhibiting translation.

Ribosome-binding protein involved in ribosome hibernation, a process during which ribosomes are stabilized in an inactive state and preserved from proteasomal degradation. Acts via its association with eiF5a (eif5a and eif5a2) at the polypeptide exit tunnel of the ribosome, preventing mRNA translation. Involved in ribosome hibernation in the mature egg by preventing mRNA translation, leading to ribosome inactivation. Ribosomes, which are produced in large quantities during oogenesis, are stored and translationally repressed in the egg and early embryo. Compared to dap1b, binds and inactivates ribosomes less efficiently. The protein is Death-associated protein 1 homolog of Danio rerio (Zebrafish).